A 514-amino-acid polypeptide reads, in one-letter code: Probable peptidoglycan glycosyltransferase FtsW (514 aa).

The next 9 membrane-spanning stretches (helical) occupy residues 45–65, 86–106, 108–128, 137–157, 182–202, 218–238, 301–321, 347–367, and 373–393; these read IGLI…VTSA, IYIV…MQFW, TANP…LLVG, WLAL…FFFT, VVFF…TVVV, LWQF…LIVF, ILAE…ILWM, VGIW…GILP, and LPLV…VALL. Disordered regions lie at residues 411–437 and 449–501; these read GDNK…RTKH and DYNQ…AGIK.

Belongs to the SEDS family. FtsW subfamily.

It is found in the cell inner membrane. The catalysed reaction is [GlcNAc-(1-&gt;4)-Mur2Ac(oyl-L-Ala-gamma-D-Glu-L-Lys-D-Ala-D-Ala)](n)-di-trans,octa-cis-undecaprenyl diphosphate + beta-D-GlcNAc-(1-&gt;4)-Mur2Ac(oyl-L-Ala-gamma-D-Glu-L-Lys-D-Ala-D-Ala)-di-trans,octa-cis-undecaprenyl diphosphate = [GlcNAc-(1-&gt;4)-Mur2Ac(oyl-L-Ala-gamma-D-Glu-L-Lys-D-Ala-D-Ala)](n+1)-di-trans,octa-cis-undecaprenyl diphosphate + di-trans,octa-cis-undecaprenyl diphosphate + H(+). Its pathway is cell wall biogenesis; peptidoglycan biosynthesis. Its function is as follows. Peptidoglycan polymerase that is essential for cell division. The polypeptide is Probable peptidoglycan glycosyltransferase FtsW (Alteromonas naphthalenivorans).